Here is a 351-residue protein sequence, read N- to C-terminus: Holliday junction branch migration complex subunit RuvB (351 aa).

The interval 1 to 186 is large ATPase domain (RuvB-L); it reads MDEKIETRLI…FGIVQRLEFY (186 aa). ATP is bound by residues Ile25, Arg26, Gly67, Lys70, Thr71, Thr72, 133-135, Arg176, Tyr186, and Arg223; that span reads EDF. Thr71 provides a ligand contact to Mg(2+). Residues 187–257 form a small ATPAse domain (RuvB-S) region; sequence RIPDLIHIVK…IAKEALDLLN (71 aa). A head domain (RuvB-H) region spans residues 260-351; the sequence is IRGLDVMDRK…ENFDLLGKVE (92 aa). DNA-binding residues include Arg296, Arg315, and Arg320.

This sequence belongs to the RuvB family. In terms of assembly, homohexamer. Forms an RuvA(8)-RuvB(12)-Holliday junction (HJ) complex. HJ DNA is sandwiched between 2 RuvA tetramers; dsDNA enters through RuvA and exits via RuvB. An RuvB hexamer assembles on each DNA strand where it exits the tetramer. Each RuvB hexamer is contacted by two RuvA subunits (via domain III) on 2 adjacent RuvB subunits; this complex drives branch migration. In the full resolvosome a probable DNA-RuvA(4)-RuvB(12)-RuvC(2) complex forms which resolves the HJ.

The protein resides in the cytoplasm. The catalysed reaction is ATP + H2O = ADP + phosphate + H(+). The RuvA-RuvB-RuvC complex processes Holliday junction (HJ) DNA during genetic recombination and DNA repair, while the RuvA-RuvB complex plays an important role in the rescue of blocked DNA replication forks via replication fork reversal (RFR). RuvA specifically binds to HJ cruciform DNA, conferring on it an open structure. The RuvB hexamer acts as an ATP-dependent pump, pulling dsDNA into and through the RuvAB complex. RuvB forms 2 homohexamers on either side of HJ DNA bound by 1 or 2 RuvA tetramers; 4 subunits per hexamer contact DNA at a time. Coordinated motions by a converter formed by DNA-disengaged RuvB subunits stimulates ATP hydrolysis and nucleotide exchange. Immobilization of the converter enables RuvB to convert the ATP-contained energy into a lever motion, pulling 2 nucleotides of DNA out of the RuvA tetramer per ATP hydrolyzed, thus driving DNA branch migration. The RuvB motors rotate together with the DNA substrate, which together with the progressing nucleotide cycle form the mechanistic basis for DNA recombination by continuous HJ branch migration. Branch migration allows RuvC to scan DNA until it finds its consensus sequence, where it cleaves and resolves cruciform DNA. This is Holliday junction branch migration complex subunit RuvB from Coxiella burnetii (strain CbuG_Q212) (Coxiella burnetii (strain Q212)).